The following is a 690-amino-acid chain: Iron-regulated transcriptional activator AFT1 (690 aa).

The tract at residues Met-1–His-21 is disordered. Asp-110 provides a ligand contact to Zn(2+). Lys-111, Lys-115, Ile-131, Glu-132, Arg-133, Ser-134, Asp-135, and Lys-138 together coordinate DNA. Cys-143 lines the Zn(2+) pocket. The segment covering Arg-148–Lys-159 has biased composition (basic residues). The segment at Arg-148–Lys-205 is disordered. The span at Pro-160–Asp-174 shows a compositional bias: basic and acidic residues. Polar residues predominate over residues Ser-181 to Ile-201. Cys-215 contributes to the Zn(2+) binding site. Lys-226 contacts DNA. Residues His-239 and His-241 each contribute to the Zn(2+) site. Asn-263 serves as a coordination point for DNA. The CDC [2Fe-2S] cluster binding motif motif lies at Cys-291–Cys-293. Disordered regions lie at residues Pro-335 to Gln-357 and Ser-612 to Asp-655. Positions Ser-339 to Val-351 are enriched in polar residues. The segment covering His-621–Asn-638 has biased composition (low complexity). Positions Gln-639–His-649 are enriched in basic and acidic residues.

In terms of assembly, homodimer. Dimerization decreases the DNA-binding activity.

It is found in the nucleus. Dimerization via the binding of Fe(2+) or a [2Fe-2S] cluster decreases the DNA-binding activity. Its function is as follows. Transcription factor that activates the genes for FRE1, FRE2 and FET3 in response to iron deprivationand thereby plays a central role in iron homeostasis. Also required for the expression of LSO1. Recognizes the consensus iron-responsive element (Fe-RE) sequence 5'-CACCC-3' in the promoters of target genes. Iron could interact directly with AFT1 and inhibits its activity. In high iron condition, the presence of Fe(2+) or [2Fe-2S] cluster leads to dimerization, which in turn leads to a decrease in DNA affinity. The chain is Iron-regulated transcriptional activator AFT1 from Saccharomyces cerevisiae (strain ATCC 204508 / S288c) (Baker's yeast).